Reading from the N-terminus, the 314-residue chain is DNA-directed RNA polymerase subunit alpha (314 aa).

Positions 1 to 228 are alpha N-terminal domain (alpha-NTD); that stretch reads MIEIEKPRIE…EHLNIFVGLT (228 aa). Positions 245–314 are alpha C-terminal domain (alpha-CTD); sequence KEKVLEMSIE…DLGLGLRKED (70 aa).

The protein belongs to the RNA polymerase alpha chain family. Homodimer. The RNAP catalytic core consists of 2 alpha, 1 beta, 1 beta' and 1 omega subunit. When a sigma factor is associated with the core the holoenzyme is formed, which can initiate transcription.

The catalysed reaction is RNA(n) + a ribonucleoside 5'-triphosphate = RNA(n+1) + diphosphate. In terms of biological role, DNA-dependent RNA polymerase catalyzes the transcription of DNA into RNA using the four ribonucleoside triphosphates as substrates. This chain is DNA-directed RNA polymerase subunit alpha, found in Staphylococcus aureus (strain bovine RF122 / ET3-1).